We begin with the raw amino-acid sequence, 183 residues long: Seminal plasma protein BSP-30 kDa (183 aa).

A signal peptide spans 1-25; it reads MAPLVGLFLIWAGASVFQQLHPVNG. The segment at 23–47 is disordered; the sequence is VNGGDIPDPGSKPTPPGMADELPTE. O-linked (GalNAc...) threonine glycans are attached at residues threonine 36, threonine 46, threonine 57, threonine 58, threonine 59, and threonine 64. 2 consecutive Fibronectin type-II domains span residues 92-136 and 137-183; these read FEGP…FCTE and RDEP…WKYC. 4 disulfide bridges follow: cysteine 97-cysteine 121, cysteine 111-cysteine 134, cysteine 142-cysteine 168, and cysteine 156-cysteine 183.

Belongs to the seminal plasma protein family.

It is found in the secreted. Binds to spermatozoa upon ejaculation and may play a role in sperm capacitation. Displays heparin-, gelatin- and phospholipid-binding activities. This is Seminal plasma protein BSP-30 kDa from Bos taurus (Bovine).